We begin with the raw amino-acid sequence, 85 residues long: Large ribosomal subunit protein bL31B (85 aa).

The protein belongs to the bacterial ribosomal protein bL31 family. Type B subfamily. As to quaternary structure, part of the 50S ribosomal subunit.

The chain is Large ribosomal subunit protein bL31B from Kocuria rhizophila (strain ATCC 9341 / DSM 348 / NBRC 103217 / DC2201).